A 290-amino-acid polypeptide reads, in one-letter code: Dual-specificity RNA pseudouridine synthase RluF (290 aa).

An S4 RNA-binding domain is found at 7–72 (VRLNKYISES…EAEDLVLIAL (66 aa)). 2 interaction with RNA regions span residues 105-108 (RLDK) and 187-190 (RQIR). Catalysis depends on aspartate 107, which acts as the Nucleophile. The segment at 243 to 290 (VKPKAKAKPKTAGIKRPVVKMEKTAEKGGRPASNGKRFTSPGRKKKGR) is disordered. Positions 261 to 271 (VKMEKTAEKGG) are enriched in basic and acidic residues.

This sequence belongs to the pseudouridine synthase RsuA family. In terms of assembly, monomer.

The catalysed reaction is uridine(2604) in 23S rRNA = pseudouridine(2604) in 23S rRNA. It catalyses the reaction uridine(35) in tRNA(Tyr) = pseudouridine(35) in tRNA(Tyr). In terms of biological role, dual specificity enzyme that catalyzes the synthesis of pseudouridine from uracil-2604 in 23S ribosomal RNA and from uracil-35 in the anticodon of tRNA(Tyr). Can, to a small extent, also react with uracil-2605. The sequence is that of Dual-specificity RNA pseudouridine synthase RluF (rluF) from Escherichia coli (strain K12).